The following is a 169-amino-acid chain: Acetolactate synthase small subunit (169 aa).

The region spanning 8-85 is the ACT domain; that stretch reads TLSVLVEDTP…KVVEQEADNS (78 aa).

This sequence belongs to the acetolactate synthase small subunit family. Dimer of large and small chains.

It catalyses the reaction 2 pyruvate + H(+) = (2S)-2-acetolactate + CO2. Its pathway is amino-acid biosynthesis; L-isoleucine biosynthesis; L-isoleucine from 2-oxobutanoate: step 1/4. It participates in amino-acid biosynthesis; L-valine biosynthesis; L-valine from pyruvate: step 1/4. This is Acetolactate synthase small subunit (ilvH) from Mycobacterium leprae (strain TN).